The primary structure comprises 176 residues: MLTTNTLAVLLLLFLSLCSGQSPPAPEPIAADGPSSPVNCLVSMLNVSDCFSYVQVGSNEIKPEAACCPELAGMVQSSPECVCNLYGGGASPRFGVKLDKQRAEQLSTICGVKAPSPSLCSVLGFPTISPAGSEDSSSGSEGSDKDKKNGAMTTKYCGVALNSLALLLLFTFLSLS.

Positions 1-20 (MLTTNTLAVLLLLFLSLCSG) are cleaved as a signal peptide. Intrachain disulfides connect cysteine 40–cysteine 83, cysteine 50–cysteine 67, cysteine 68–cysteine 110, and cysteine 81–cysteine 120. A glycan (N-linked (GlcNAc...) asparagine) is linked at asparagine 46. Asparagine 149 carries GPI-anchor amidated asparagine lipidation. The propeptide at 150–176 (GAMTTKYCGVALNSLALLLLFTFLSLS) is removed in mature form.

It belongs to the plant LTP family. As to expression, preferentially expressed in the endodermis of hypocotyls and roots of seedlings, and in petals and anthers of inflorescences. May also be expressed in siliques, carpels and pedicels.

The protein resides in the cell membrane. In terms of biological role, probable lipid transfer protein. This is Non-specific lipid transfer protein GPI-anchored 12 from Arabidopsis thaliana (Mouse-ear cress).